We begin with the raw amino-acid sequence, 846 residues long: Protein kintoun (846 aa).

4 disordered regions span residues 1–21, 377–412, 581–657, and 743–846; these read MSTAAGSRKKHSKLHNEERAD, DSGVELHSNSESPVEDDADGYMPETPELETAAPPDP, HTSI…DSTI, and HDSS…DDEI. Position 378 is a phosphoserine (Ser-378). Residues 399–408 are compositionally biased toward low complexity; the sequence is PETPELETAA. Basic residues-rich tracts occupy residues 596-612 and 750-766; these read LHKKPSKKQRKRNKKQR and QRKKNQKRRNCKLRAQQ. The residue at position 770 (Ser-770) is a Phosphoserine. Residues 821 to 832 are compositionally biased toward basic and acidic residues; that stretch reads TRQDHADADAKN.

Belongs to the PIH1 family. Kintoun subfamily. As to quaternary structure, interacts with Pp1alpha-96A, Pp1-87B, Pp1-13C and flw.

The protein resides in the cytoplasm. Its function is as follows. Required for cytoplasmic pre-assembly of axonemal dyneins, thereby playing a central role in motility in cilia and flagella. Involved in pre-assembly of dynein arm complexes in the cytoplasm before intraflagellar transport loads them for the ciliary compartment. The polypeptide is Protein kintoun (Drosophila pseudoobscura pseudoobscura (Fruit fly)).